The following is a 313-amino-acid chain: MIKRKKIALIGAGSIGGMIAYLVRSRNLGDVVLLDVNGGIAKGKALDIAESSPVAKHNGEILGTNNYADIEGADAIIVTAGISRKPGMSRDDLINTNVHVIKEVAENIAKYAPNAFVVVVTNPLDIMVLAMHKYSHLPSNMVVGMAGVLDAARFSYFIAKELNVSVDSVSSIVLGGHGDFMLPLVKYSSVGGISIADLVKMNLITQDRVNEIIEKTRKGGEEIVNLLKVGSAYYAPAESALLMVDSYLNDRRLMLSCSVYLKGEYGVHDLFVGVPVIIGKNGVEKVIELQLTEEEKNVFNDSVMSIRKLVSNI.

Residues 11-16 (GAGSIG) and aspartate 35 contribute to the NAD(+) site. Positions 84 and 90 each coordinate substrate. Residues asparagine 97 and 120–122 (VTN) each bind NAD(+). The substrate site is built by asparagine 122 and arginine 153. The Proton acceptor role is filled by histidine 177.

Belongs to the LDH/MDH superfamily. MDH type 3 family.

It catalyses the reaction (S)-malate + NAD(+) = oxaloacetate + NADH + H(+). In terms of biological role, catalyzes the reversible oxidation of malate to oxaloacetate. This is Malate dehydrogenase from Ehrlichia chaffeensis (strain ATCC CRL-10679 / Arkansas).